Reading from the N-terminus, the 234-residue chain is Cytidylate kinase (234 aa).

10–18 contributes to the ATP binding site; that stretch reads GYSACGKST.

The protein belongs to the cytidylate kinase family. Type 1 subfamily.

The protein localises to the cytoplasm. It catalyses the reaction CMP + ATP = CDP + ADP. The catalysed reaction is dCMP + ATP = dCDP + ADP. The sequence is that of Cytidylate kinase from Cytophaga hutchinsonii (strain ATCC 33406 / DSM 1761 / CIP 103989 / NBRC 15051 / NCIMB 9469 / D465).